A 185-amino-acid polypeptide reads, in one-letter code: uncharacterized protein (185 aa).

Over 1-69 (MSSFIDSIKS…SSDCSRAERT (69 aa)) the chain is Cytoplasmic. The helical transmembrane segment at 70-90 (FNLILFAIVDLVICCESMAFF) threads the bilayer. Position 91 (asparagine 91) is a topological domain, extracellular. A helical transmembrane segment spans residues 92–112 (LLLKLPSMLLVSFLTMLVFSI). Residues 113-118 (SYSWSA) are Cytoplasmic-facing. A helical transmembrane segment spans residues 119–139 (FNWISFAFSSASFLMKACILF). At 140 to 185 (NSSFTWFGVKAVIAEDMLYRMVRGLFCASFVKQLQTTFLATAIVLC) the chain is on the extracellular side.

The protein localises to the membrane. This is an uncharacterized protein from Saccharomyces cerevisiae (strain ATCC 204508 / S288c) (Baker's yeast).